The chain runs to 224 residues: Probable Brix domain-containing ribosomal biogenesis protein (224 aa).

Residues 1-196 (MMLITTSHRP…IWIMEDGRRW (196 aa)) form the Brix domain.

Its function is as follows. Probably involved in the biogenesis of the ribosome. The protein is Probable Brix domain-containing ribosomal biogenesis protein of Pyrococcus horikoshii (strain ATCC 700860 / DSM 12428 / JCM 9974 / NBRC 100139 / OT-3).